A 135-amino-acid chain; its full sequence is MPVDFNGYWKMLSNENFEEYLRALDVNVALRKIANLLKPDKEIVQDGDHMIIRTLSTFRNYIMDFQVGKEFEEDLTGIDDRKCMTTVSWDGDKLQCVQKGEKEGRGWTQWIEGDELHLEMRAEGVTCKQVFKKVH.

Residues 22-32 form an important for interaction with STRA6 region; sequence RALDVNVALRK. 3 residues coordinate all-trans-retinol: lysine 41, methionine 63, and glutamine 109.

The protein belongs to the calycin superfamily. Fatty-acid binding protein (FABP) family. Interacts (only as retinol-free apoprotein) with STRA6.

The protein resides in the cytoplasm. It is found in the lipid droplet. Its function is as follows. Cytoplasmic retinol-binding protein. Accepts retinol from the transport protein STRA6, and thereby contributes to retinol uptake, storage and retinoid homeostasis. The polypeptide is Retinol-binding protein 1 (Rbp1) (Rattus norvegicus (Rat)).